The following is a 324-amino-acid chain: Probable 6-phosphogluconolactonase 4, chloroplastic (324 aa).

A chloroplast-targeting transit peptide spans 1-61 (MSVSAAVAAA…RAPAMATDCA (61 aa)). The segment at 20–43 (RRRSPPASRVAATSRGRPFSSGPH) is disordered. Low complexity predominate over residues 24–34 (PPASRVAATSR).

Belongs to the glucosamine/galactosamine-6-phosphate isomerase family. 6-phosphogluconolactonase subfamily.

It localises to the plastid. Its subcellular location is the chloroplast. It catalyses the reaction 6-phospho-D-glucono-1,5-lactone + H2O = 6-phospho-D-gluconate + H(+). Its pathway is carbohydrate degradation; pentose phosphate pathway; D-ribulose 5-phosphate from D-glucose 6-phosphate (oxidative stage): step 2/3. Functionally, hydrolysis of 6-phosphogluconolactone to 6-phosphogluconate. The sequence is that of Probable 6-phosphogluconolactonase 4, chloroplastic from Oryza sativa subsp. indica (Rice).